The chain runs to 179 residues: ADP-ribosylation factor-like protein 5A (179 aa).

A lipid anchor (N-myristoyl glycine) is attached at G2. Residues 23–30, 66–70, 125–128, and A159 each bind GTP; these read GLDNAGKT, DIGGQ, and NKQD.

It belongs to the small GTPase superfamily. Arf family. Low amounts were found in most tissues examined with highest levels in brain, intestine and thymus.

Its function is as follows. Lacks ADP-ribosylation enhancing activity. In Rattus norvegicus (Rat), this protein is ADP-ribosylation factor-like protein 5A (Arl5a).